A 497-amino-acid chain; its full sequence is Cytochrome P450 71A12 (497 aa).

A helical transmembrane segment spans residues 4 to 24 (ILMVSLCLTTLITLFLLKQFL). Heme is bound at residue Cys-439.

Belongs to the cytochrome P450 family. The cofactor is heme.

It localises to the membrane. Converts indole-3-acetaldoxime to indole cyanohydrin. Involved in the biosynthetic pathway to 4-hydroxyindole-3-carbonyl nitrile (4-OH-ICN), a cyanogenic metabolite required for inducible pathogen defense. The sequence is that of Cytochrome P450 71A12 (CYP71A12) from Arabidopsis thaliana (Mouse-ear cress).